The chain runs to 72 residues: Conotoxin Gla(2)-TxVI/A (72 aa).

The N-terminal stretch at 1 to 19 (MQKLIILLLVAAVLMSTQA) is a signal peptide. Positions 20-44 (LFQEKRPMKKIDFLSKGKTDAEKQQ) are excised as a propeptide. Intrachain disulfides connect Cys-48–Cys-62, Cys-55–Cys-66, and Cys-61–Cys-70. Glu-56 is subject to 4-carboxyglutamate. Position 58 is a 4-hydroxyproline (Pro-58). A Serine amide modification is found at Ser-71.

Belongs to the conotoxin O2 superfamily. Brominated at one of the Trp residues. As to expression, expressed by the venom duct.

It is found in the secreted. The protein is Conotoxin Gla(2)-TxVI/A of Conus textile (Cloth-of-gold cone).